The primary structure comprises 416 residues: Tumor necrosis factor receptor superfamily member 16 (416 aa).

The signal sequence occupies residues 1 to 19 (MAGFVPLLLLLLPAGPTWG). 4 TNFR-Cys repeats span residues 23-57 (KCLT…TVCE), 58-99 (PCLD…DAVC), 100-138 (RCAY…DTVC), and 140-180 (ECPE…DAEC). 12 disulfide bridges follow: cysteine 24–cysteine 35, cysteine 36–cysteine 49, cysteine 39–cysteine 56, cysteine 59–cysteine 75, cysteine 78–cysteine 91, cysteine 81–cysteine 99, cysteine 101–cysteine 114, cysteine 117–cysteine 130, cysteine 120–cysteine 138, cysteine 141–cysteine 156, cysteine 159–cysteine 172, and cysteine 162–cysteine 180. The Extracellular portion of the chain corresponds to 29–239 (YTTSGECCKA…PVVSRGTADN (211 aa)). N-linked (GlcNAc...) asparagine glycosylation occurs at asparagine 52. A helical transmembrane segment spans residues 240 to 261 (LIPVYCSILAAVVVGLVAYIAF). Residues 262 to 416 (KRWNSCKQNK…YSESTATSPV (155 aa)) are Cytoplasmic-facing. Composition is skewed to polar residues over residues 270 to 284 (NKQG…QTPS) and 294 to 315 (SGIS…STQG). Positions 270 to 328 (NKQGANNRPVNQTPSPEGEKLHSDSGISVDSQSLHDQQPPNQSTQGPAPKGDGSLYASL) are disordered. Positions 333 to 410 (QEEVEKLLSS…DIAESLYSES (78 aa)) constitute a Death domain.

As to quaternary structure, homodimer; disulfide-linked. Heterodimer with SORCS2. The extracellular domains of the heterodimer bind NGF. Post-translationally, N- and O-glycosylated. In terms of processing, phosphorylated on serine residues. In terms of tissue distribution, detected in embryonic dorsal root ganglion and retina.

The protein resides in the cell membrane. Its subcellular location is the perikaryon. It is found in the cell projection. It localises to the growth cone. The protein localises to the dendritic spine. Functionally, low affinity receptor which can bind to NGF, BDNF, NTF3, and NTF4. Forms a heterodimeric receptor with SORCS2 that binds the precursor forms of NGF, BDNF and NTF3 with high affinity, and has much lower affinity for mature NGF and BDNF. Plays an important role in differentiation and survival of specific neuronal populations during development. Can mediate cell survival as well as cell death of neural cells. Plays a role in the inactivation of RHOA. Necessary for the circadian oscillation of clock genes in the suprachiasmatic nucleus (SCmgetaN) of the brain and in liver and of the genes involved in glucose and lipid metabolism in the liver. The polypeptide is Tumor necrosis factor receptor superfamily member 16 (NGFR) (Gallus gallus (Chicken)).